The chain runs to 513 residues: Tyrosine-protein phosphatase non-receptor type substrate 1 (513 aa).

The first 31 residues, 1-31 (MEPAGPAPGRLGPLLLCLLLSASCFCTGATG), serve as a signal peptide directing secretion. Positions 32-137 (KELKVTQPEK…SSEPDTEIQS (106 aa)) constitute an Ig-like V-type domain. The Extracellular portion of the chain corresponds to 32-373 (KELKVTQPEK…PDNNATHNWN (342 aa)). N-linked (GlcNAc...) asparagine glycosylation is found at Asn54, Asn92, Asn168, Asn180, Asn205, Asn209, Asn246, Asn271, Asn293, Asn302, Asn312, Asn320, Asn345, and Asn367. A disulfide bridge connects residues Cys55 and Cys121. 2 consecutive Ig-like C1-type domains span residues 149 to 248 (PSPP…ANLS) and 255 to 343 (PTVK…PAIT). A disulfide bond links Cys171 and Cys229. Cys274 and Cys332 are disulfide-bonded. Residues 374–394 (VFIGVGVACALLVVLLMAALY) form a helical membrane-spanning segment. Over 395–511 (LLRIKQKKAK…FSEYASVQVQ (117 aa)) the chain is Cytoplasmic. Tyr440 bears the Phosphotyrosine; by Tyr-kinases mark. The SH2-binding motif lies at 440 to 443 (YADL). Residues 444-513 (NLPKEKKPAP…EYASVQVQRK (70 aa)) form a disordered region. An SH3-binding motif is present at residues 450-455 (KPAPRA). Tyr464, Tyr481, and Tyr505 each carry phosphotyrosine; by Tyr-kinases. 3 short sequence motifs (SH2-binding) span residues 464–467 (YASI), 481–484 (YADL), and 505–508 (YASV). Positions 504-513 (EYASVQVQRK) are enriched in polar residues.

As to quaternary structure, binds PTPN11 when tyrosine-phosphorylated, except in macrophages, where it primarily binds PTPN6. Binds GRB2 vitro. Binds FGR. Binds JAK2 irrespective of its phosphorylation status and forms a stable complex. Binds SCAP1 and/or SCAP2. The resulting complex recruits FYB1. Binds PTK2B. Interacts with TRIM2. N-glycosylated. In terms of processing, phosphorylated on tyrosine residues. In terms of tissue distribution, highly expressed in cerebral cortex, brain, spinal cord, cerebellum and spleen, and at much lower levels in kidney, thymus, heart, lung and liver. Within the cerebellum, highly expressed throughout the molecular layer, and in synaptic glomeruli in the granule cell layer. Detected in neurons of the hippocampus and dentate gyrus, and in olfactory bulb. Not detected in Purkinje cells. Highly expressed in the plexiform layers, optic fiber layer and the outer segments of the photoreceptor layer in the retina. Highly expressed in macrophages. Isoform 3 is detected at very low levels in all tissues tested.

It localises to the membrane. Functionally, immunoglobulin-like cell surface receptor for CD47. Acts as a docking protein and induces translocation of PTPN6, PTPN11 and other binding partners from the cytosol to the plasma membrane. Supports adhesion of cerebellar neurons, neurite outgrowth and glial cell attachment. May play a key role in intracellular signaling during synaptogenesis and in synaptic function. Involved in the negative regulation of receptor tyrosine kinase-coupled cellular responses induced by cell adhesion, growth factors or insulin. Mediates negative regulation of phagocytosis, mast cell activation and dendritic cell activation. CD47 binding prevents maturation of immature dendritic cells and inhibits cytokine production by mature dendritic cells. Plays a role in antiviral immunity and limits new world arenavirus infection by decreasing virus internalization. Receptor for THBS1. Interaction with THBS1 stimulates phosphorylation of SIRPA. In response to THBS1, involved in ROS signaling in non-phagocytic cells, stimulating NADPH oxidase-derived ROS production. The protein is Tyrosine-protein phosphatase non-receptor type substrate 1 (Sirpa) of Mus musculus (Mouse).